The chain runs to 2319 residues: AT-rich interactive domain-containing protein 1B (2319 aa).

2 stretches are compositionally biased toward low complexity: residues Met-1–Gly-21 and Gly-43–Pro-56. 6 disordered regions span residues Met-1–His-74, Val-155–Gly-306, Ala-321–Ala-414, Arg-487–Ala-546, Gln-577–Thr-1062, and Asp-1085–Lys-1129. Ala-2 bears the N-acetylalanine mark. Positions Met-57–Leu-68 are enriched in gly residues. A compositionally biased stretch (basic residues) spans Gln-165–Ala-188. Composition is skewed to low complexity over residues Leu-189–His-215 and Ser-343–Met-363. Residues Pro-365–Asn-379 show a composition bias toward polar residues. The segment covering Gly-388–Ala-414 has biased composition (gly residues). At Arg-487 the chain carries Asymmetric dimethylarginine. The span at Ala-489–Ser-510 shows a compositional bias: polar residues. Positions Leu-502–Leu-506 match the LXXLL motif. Low complexity predominate over residues Pro-536–Ala-546. Phosphoserine is present on residues Ser-585 and Ser-599. Residue Arg-608 is modified to Asymmetric dimethylarginine. Low complexity predominate over residues Ser-620 to Gly-630. Arg-640 is subject to Asymmetric dimethylarginine. 6 stretches are compositionally biased toward low complexity: residues Gly-651 to Gln-670, Gln-677 to Gln-687, Pro-695 to Gln-712, Ser-767 to Ser-783, Gly-811 to Ser-832, and Gly-840 to Pro-849. Positions Thr-866–Thr-880 are enriched in polar residues. Positions Gly-881–Gly-892 are enriched in low complexity. Composition is skewed to polar residues over residues Ser-899–Tyr-923 and Ser-947–Ser-958. 2 stretches are compositionally biased toward low complexity: residues Pro-980 to Ser-994 and Glu-1014 to Gln-1028. Residues Ser-1029–Thr-1062 are compositionally biased toward polar residues. The ARID domain maps to Glu-1136–Glu-1227. Disordered regions lie at residues Glu-1230–Met-1334, Glu-1346–Lys-1443, Asn-1475–Ser-1647, and Asp-1782–Ser-1852. Composition is skewed to polar residues over residues Ala-1254–Met-1273 and Ser-1287–Ile-1304. Positions Ser-1305–Pro-1319 are enriched in low complexity. Composition is skewed to polar residues over residues Lys-1320 to Met-1334 and Pro-1364 to Met-1388. Residues Pro-1426 to Pro-1440 show a composition bias toward low complexity. Positions Asn-1441–Asp-1460 match the Nuclear localization signal motif. Polar residues-rich tracts occupy residues Leu-1522–Met-1534 and Glu-1579–Pro-1601. 3 positions are modified to phosphoserine: Ser-1625, Ser-1638, and Ser-1642. Residues Ala-1627–Lys-1641 show a composition bias toward polar residues. Positions Asp-1782 to Ser-1791 are enriched in basic and acidic residues. Residue Ser-1798 is modified to Phosphoserine. Residues Gly-1799 to Glu-1823 show a composition bias toward acidic residues. Residues Ala-1842–Ser-1852 show a composition bias toward basic and acidic residues. N6-acetyllysine is present on Lys-1860. Disordered regions lie at residues Phe-1904–Lys-1941 and Arg-1954–Phe-1973. Residues Arg-1925–Glu-1940 are compositionally biased toward basic and acidic residues. An LXXLL motif is present at residues Leu-2119–Leu-2123.

In terms of assembly, component of SWI/SNF chromatin remodeling complexes, in some of which it can be mutually exclusive with ARID1B/BAF250B. The canonical complex contains a catalytic subunit (either SMARCA4/BRG1/BAF190A or SMARCA2/BRM/BAF190B) and at least SMARCE1, ACTL6A/BAF53, SMARCC1/BAF155, SMARCC2/BAF170, and SMARCB1/SNF5/BAF47. Other subunits specific to each of the complexes may also be present permitting several possible combinations developmentally and tissue specific. Component of the BAF (SWI/SNF-A) complex, which includes at least actin (ACTB), ARID1A/BAF250A, ARID1B/BAF250B, SMARCA2/BRM, SMARCA4/BRG1/BAF190A, ACTL6A/BAF53, ACTL6B/BAF53B, SMARCE1/BAF57, SMARCC1/BAF155, SMARCC2/BAF170, SMARCB1/SNF5/INI1, and one or more SMARCD1/BAF60A, SMARCD2/BAF60B, or SMARCD3/BAF60C. In muscle cells, the BAF complex also contains DPF3. Component of neural progenitors-specific chromatin remodeling complex (npBAF complex) composed of at least, ARID1A/BAF250A or ARID1B/BAF250B, SMARCD1/BAF60A, SMARCD3/BAF60C, SMARCA2/BRM/BAF190B, SMARCA4/BRG1/BAF190A, SMARCB1/BAF47, SMARCC1/BAF155, SMARCE1/BAF57, SMARCC2/BAF170, PHF10/BAF45A, ACTL6A/BAF53A and actin. Component of neuron-specific chromatin remodeling complex (nBAF complex) composed of at least, ARID1A/BAF250A or ARID1B/BAF250B, SMARCD1/BAF60A, SMARCD3/BAF60C, SMARCA2/BRM/BAF190B, SMARCA4/BRG1/BAF190A, SMARCB1/BAF47, SMARCC1/BAF155, SMARCE1/BAF57, SMARCC2/BAF170, DPF1/BAF45B, DPF3/BAF45C, ACTL6B/BAF53B and actin. Component of a SWI/SNF-like EBAFb complex, at least composed of SMARCA4/BRG1/BAF190A, SMARCB1/BAF47/SNF5, ACTL6A/BAF53A, SMARCE1/BAF57, SMARCD1/BAF60A, SMARCD2/BAF60B, SMARCC1/BAF155, SMARCC2/BAF170, ARID1B/BAF250B, MLLT1/ENL and actin. Interacts through its C-terminus with SMARCA2/BRM/BAF190B and SMARCA4/BRG1/BAF190A. Interacts with SMARCC1/BAF155. Widely expressed with high levels in heart, skeletal muscle and kidney.

The protein resides in the nucleus. Functionally, involved in transcriptional activation and repression of select genes by chromatin remodeling (alteration of DNA-nucleosome topology). Component of SWI/SNF chromatin remodeling complexes that carry out key enzymatic activities, changing chromatin structure by altering DNA-histone contacts within a nucleosome in an ATP-dependent manner. Belongs to the neural progenitors-specific chromatin remodeling complex (npBAF complex) and the neuron-specific chromatin remodeling complex (nBAF complex). During neural development a switch from a stem/progenitor to a postmitotic chromatin remodeling mechanism occurs as neurons exit the cell cycle and become committed to their adult state. The transition from proliferating neural stem/progenitor cells to postmitotic neurons requires a switch in subunit composition of the npBAF and nBAF complexes. As neural progenitors exit mitosis and differentiate into neurons, npBAF complexes which contain ACTL6A/BAF53A and PHF10/BAF45A, are exchanged for homologous alternative ACTL6B/BAF53B and DPF1/BAF45B or DPF3/BAF45C subunits in neuron-specific complexes (nBAF). The npBAF complex is essential for the self-renewal/proliferative capacity of the multipotent neural stem cells. The nBAF complex along with CREST plays a role regulating the activity of genes essential for dendrite growth. Binds DNA non-specifically. In Homo sapiens (Human), this protein is AT-rich interactive domain-containing protein 1B.